Here is an 814-residue protein sequence, read N- to C-terminus: Rho GTPase-activating protein 44 (814 aa).

One can recognise a BAR domain in the interval glutamine 14–glutamate 249. The region spanning lysine 255 to phenylalanine 445 is the Rho-GAP domain. 3 disordered regions span residues alanine 467–serine 493, serine 531–threonine 768, and serine 784–leucine 814. The segment covering proline 479–arginine 489 has biased composition (basic and acidic residues). A Phosphoserine modification is found at serine 493. Composition is skewed to low complexity over residues serine 531–proline 541, serine 567–serine 581, serine 598–glycine 612, proline 622–proline 637, serine 684–alanine 704, and serine 741–threonine 752. Residues lysine 727–leucine 814 are interaction with BST2. Residues proline 790–serine 805 show a composition bias toward basic and acidic residues. Position 805 is a phosphoserine (serine 805). A PDZ-binding motif is present at residues serine 811–leucine 814.

As to quaternary structure, interacts with BST2 (via cytoplasmic domain). Interacts (probably via PDZ-binding motif) with SHANK3 (via PDZ domain); the interaction takes place in dendritic spines and promotes GRIA1 exocytosis. Expressed in brain, detected at high levels in hippocampal CA1 (at protein level).

The protein resides in the cell projection. The protein localises to the dendritic spine. It localises to the recycling endosome. It is found in the presynapse. Its subcellular location is the dendrite. In terms of biological role, GTPase-activating protein (GAP) that stimulates the GTPase activity of Rho-type GTPases. Thereby, controls Rho-type GTPases cycling between their active GTP-bound and inactive GDP-bound states. Acts as a GAP at least for CDC42 and RAC1. In neurons, is involved in dendritic spine formation and synaptic plasticity in a specific RAC1-GAP activity. Limits the initiation of exploratory dendritic filopodia. Recruited to actin-patches that seed filopodia, binds specifically to plasma membrane sections that are deformed inward by acto-myosin mediated contractile forces. Acts through GAP activity on RAC1 to reduce actin polymerization necessary for filopodia formation. In association with SHANK3, promotes GRIA1 exocytosis from recycling endosomes and spine morphological changes associated to long-term potentiation. This is Rho GTPase-activating protein 44 from Rattus norvegicus (Rat).